The chain runs to 521 residues: Maturase K (521 aa).

This sequence belongs to the intron maturase 2 family. MatK subfamily.

It localises to the plastid. It is found in the chloroplast. Functionally, usually encoded in the trnK tRNA gene intron. Probably assists in splicing its own and other chloroplast group II introns. The protein is Maturase K of Trillium catesbaei (Catesby's trillium).